A 165-amino-acid chain; its full sequence is 2-C-methyl-D-erythritol 2,4-cyclodiphosphate synthase (165 aa).

A divalent metal cation contacts are provided by Asp12 and His14. Residues 12 to 14 (DVH) and 38 to 39 (HS) each bind 4-CDP-2-C-methyl-D-erythritol 2-phosphate. His46 provides a ligand contact to a divalent metal cation. Residues 60-62 (DIG), 65-69 (FPDTD), Phe143, and Arg146 each bind 4-CDP-2-C-methyl-D-erythritol 2-phosphate.

Belongs to the IspF family. Homotrimer. It depends on a divalent metal cation as a cofactor.

It catalyses the reaction 4-CDP-2-C-methyl-D-erythritol 2-phosphate = 2-C-methyl-D-erythritol 2,4-cyclic diphosphate + CMP. Its pathway is isoprenoid biosynthesis; isopentenyl diphosphate biosynthesis via DXP pathway; isopentenyl diphosphate from 1-deoxy-D-xylulose 5-phosphate: step 4/6. Functionally, involved in the biosynthesis of isopentenyl diphosphate (IPP) and dimethylallyl diphosphate (DMAPP), two major building blocks of isoprenoid compounds. Catalyzes the conversion of 4-diphosphocytidyl-2-C-methyl-D-erythritol 2-phosphate (CDP-ME2P) to 2-C-methyl-D-erythritol 2,4-cyclodiphosphate (ME-CPP) with a corresponding release of cytidine 5-monophosphate (CMP). The polypeptide is 2-C-methyl-D-erythritol 2,4-cyclodiphosphate synthase (Aromatoleum aromaticum (strain DSM 19018 / LMG 30748 / EbN1) (Azoarcus sp. (strain EbN1))).